The sequence spans 644 residues: Neurofilament medium polypeptide (644 aa).

A coil 1B region spans residues 1–33; sequence VKVELDKKVQSLQDEVAFLRTNHEEEVADLLAQ. The IF rod domain maps to 1–197; the sequence is VKVELDKKVQ…KLLEGEETRF (197 aa). S11 is modified (phosphoserine). The segment at 34–50 is linker 12; it reads IQASHITVERKDYLKTD. A coil 2A region spans residues 51–72; the sequence is ISSALKEIRSQLECHSDQNMHQ. The segment at 73-76 is linker 2; sequence AEEW. The interval 77–197 is coil 2B; that stretch reads FKCRYAKLTE…KLLEGEETRF (121 aa). Y105 is subject to Phosphotyrosine. Phosphoserine is present on residues S131, S203, and S215. The interval 198 to 643 is tail; sequence STFSGSITGP…HAIVKEVTQS (446 aa). An O-linked (GlcNAc) threonine glycan is attached at T217. Phosphoserine is present on residues S253 and S269. The interval 270 to 582 is disordered; that stretch reads VKEEEKEEEA…GGDRSEEKVV (313 aa). Residues 274–292 are compositionally biased toward acidic residues; that stretch reads EKEEEAEGKEEEQEAEEEV. S298 is subject to Phosphoserine. Residues 308-328 are compositionally biased toward acidic residues; that stretch reads KEEEGEKEEEGQEEEEEEEDE. Residues 329-350 are compositionally biased toward basic and acidic residues; it reads GVKSDQAEEGGSEKEGSSKNEG. S332, S340, S345, and S346 each carry phosphoserine. The span at 351 to 368 shows a compositional bias: acidic residues; that stretch reads EQEEGETEAEGEVEEAEA. Position 357 is a phosphothreonine (T357). Over residues 369–400 the composition is skewed to basic and acidic residues; that stretch reads KEEKKTEEKSEEVAAKEEPVTEAKVGKPEKAK. Residues S401, S406, S442, and S465 each carry the phosphoserine modification. Residues 422 to 470 are compositionally biased toward basic and acidic residues; sequence GEQKEEEEKVEEEKKKAAKESPKEEKVEKKEEKPKDVPKKKAESPVKEE. Over residues 474 to 483 the composition is skewed to low complexity; it reads EAATITKPTK. The span at 485–508 shows a compositional bias: basic and acidic residues; it reads GLEKETKEGEKPLQQEKEKEKAGE. A phosphoserine mark is found at S512, S550, and S566. Over residues 545-557 the composition is skewed to basic and acidic residues; that stretch reads TKEKGSGREEEKG. Positions 568–582 are enriched in basic and acidic residues; sequence ADEKKGGDRSEEKVV.

The protein belongs to the intermediate filament family. As to quaternary structure, forms heterodimers with NEFL; which can further hetero-oligomerize (in vitro). Forms heterodimers with INA (in vitro). There are a number of repeats of the tripeptide K-S-P, NFM is phosphorylated on a number of the serines in this motif. It is thought that phosphorylation of NFM results in the formation of interfilament cross bridges that are important in the maintenance of axonal caliber. In terms of processing, phosphorylation seems to play a major role in the functioning of the larger neurofilament polypeptides (NF-M and NF-H), the levels of phosphorylation being altered developmentally and coincidentally with a change in the neurofilament function. Post-translationally, phosphorylated in the head and rod regions by the PKC kinase PKN1, leading to the inhibition of polymerization.

The protein resides in the cytoplasm. Its subcellular location is the cytoskeleton. It localises to the cell projection. The protein localises to the axon. In terms of biological role, neurofilaments usually contain three intermediate filament proteins: NEFL, NEFM, and NEFH which are involved in the maintenance of neuronal caliber. May additionally cooperate with the neuronal intermediate filament proteins PRPH and INA to form neuronal filamentous networks. The polypeptide is Neurofilament medium polypeptide (NEFM) (Oryctolagus cuniculus (Rabbit)).